The sequence spans 336 residues: Glycerol-3-phosphate dehydrogenase [NAD(P)+] (336 aa).

2 residues coordinate NADPH: Trp16 and Lys109. Residues Lys109, Gly137, and Ser139 each contribute to the sn-glycerol 3-phosphate site. Ala141 contributes to the NADPH binding site. Sn-glycerol 3-phosphate is bound by residues Lys192, Asp245, Ser255, Arg256, and Asn257. Residue Lys192 is the Proton acceptor of the active site. Arg256 is an NADPH binding site. Residues Val280 and Glu282 each contribute to the NADPH site.

This sequence belongs to the NAD-dependent glycerol-3-phosphate dehydrogenase family.

It is found in the cytoplasm. It carries out the reaction sn-glycerol 3-phosphate + NAD(+) = dihydroxyacetone phosphate + NADH + H(+). The enzyme catalyses sn-glycerol 3-phosphate + NADP(+) = dihydroxyacetone phosphate + NADPH + H(+). The protein operates within membrane lipid metabolism; glycerophospholipid metabolism. Its function is as follows. Catalyzes the reduction of the glycolytic intermediate dihydroxyacetone phosphate (DHAP) to sn-glycerol 3-phosphate (G3P), the key precursor for phospholipid synthesis. In Hyphomonas neptunium (strain ATCC 15444), this protein is Glycerol-3-phosphate dehydrogenase [NAD(P)+].